Reading from the N-terminus, the 382-residue chain is Heme A synthase (382 aa).

The next 7 helical transmembrane spans lie at 37-57, 126-146, 152-172, 188-208, 231-251, 288-308, and 332-352; these read IRVWLQILFALVFIMIAVGGL, VIGVVWALGFGYFLVRRQVPA, LLFLGLLGGAQGAIGWWMVAS, LATHLGLAFVILGFIAWYIME, STGLLHFTFLQILLGALVAGI, LVQFMHRVTGYVLILFTVVVW, and LQIVLGIVTVLYGAPAHIAIF. His-293 serves as a coordination point for heme. Residue His-353 coordinates heme. Residues 356–376 traverse the membrane as a helical segment; sequence LAVIVWVLILRARFLSGYPIA.

Belongs to the COX15/CtaA family. Type 2 subfamily. Interacts with CtaB. The cofactor is heme b.

The protein resides in the cell membrane. The catalysed reaction is Fe(II)-heme o + 2 A + H2O = Fe(II)-heme a + 2 AH2. Its pathway is porphyrin-containing compound metabolism; heme A biosynthesis; heme A from heme O: step 1/1. In terms of biological role, catalyzes the conversion of heme O to heme A by two successive hydroxylations of the methyl group at C8. The first hydroxylation forms heme I, the second hydroxylation results in an unstable dihydroxymethyl group, which spontaneously dehydrates, resulting in the formyl group of heme A. The polypeptide is Heme A synthase (Roseobacter denitrificans (strain ATCC 33942 / OCh 114) (Erythrobacter sp. (strain OCh 114))).